The following is a 506-amino-acid chain: Glycine--tRNA ligase (506 aa).

R99 and E189 together coordinate substrate. ATP-binding positions include 221 to 223 (RNE), 231 to 236 (FRVREF), 305 to 306 (EL), and 364 to 367 (GVDR). Substrate is bound at residue 236 to 240 (FEQME). Residue 360-364 (EPSAG) coordinates substrate.

Belongs to the class-II aminoacyl-tRNA synthetase family. Homodimer.

The protein localises to the cytoplasm. The enzyme catalyses tRNA(Gly) + glycine + ATP = glycyl-tRNA(Gly) + AMP + diphosphate. Catalyzes the attachment of glycine to tRNA(Gly). The protein is Glycine--tRNA ligase of Thermus thermophilus (strain ATCC BAA-163 / DSM 7039 / HB27).